A 429-amino-acid polypeptide reads, in one-letter code: Phosphoribosylamine--glycine ligase (429 aa).

The region spanning 109 to 316 (KDFLARHKIP…LVELCLAACE (208 aa)) is the ATP-grasp domain. ATP is bound at residue 135–196 (LREKGAPIVI…EEFLDGEEAS (62 aa)). Residues 212-236 (SQDHKRVGDKDTGPNTGGMGAYSPA) form a disordered region. Over residues 213–223 (QDHKRVGDKDT) the composition is skewed to basic and acidic residues. Glu286 and Asn288 together coordinate Mg(2+).

This sequence belongs to the GARS family. Monomer. It depends on Mg(2+) as a cofactor. The cofactor is Mn(2+).

It catalyses the reaction 5-phospho-beta-D-ribosylamine + glycine + ATP = N(1)-(5-phospho-beta-D-ribosyl)glycinamide + ADP + phosphate + H(+). It participates in purine metabolism; IMP biosynthesis via de novo pathway; N(1)-(5-phospho-D-ribosyl)glycinamide from 5-phospho-alpha-D-ribose 1-diphosphate: step 2/2. In terms of biological role, catalyzes the reversible conversion of phosphoribosylamine to glycinamide ribonucleotide, an enzymatic step in purine biosynthesis pathway. The sequence is that of Phosphoribosylamine--glycine ligase (purD) from Escherichia coli (strain K12).